We begin with the raw amino-acid sequence, 389 residues long: Chorismate synthase (389 aa).

Positions 41 and 47 each coordinate NADP(+). FMN contacts are provided by residues 129 to 131 (RSS), 247 to 248 (NA), glycine 291, 306 to 310 (KPIST), and arginine 332.

It belongs to the chorismate synthase family. As to quaternary structure, homotetramer. The cofactor is FMNH2.

The catalysed reaction is 5-O-(1-carboxyvinyl)-3-phosphoshikimate = chorismate + phosphate. It participates in metabolic intermediate biosynthesis; chorismate biosynthesis; chorismate from D-erythrose 4-phosphate and phosphoenolpyruvate: step 7/7. Its function is as follows. Catalyzes the anti-1,4-elimination of the C-3 phosphate and the C-6 proR hydrogen from 5-enolpyruvylshikimate-3-phosphate (EPSP) to yield chorismate, which is the branch point compound that serves as the starting substrate for the three terminal pathways of aromatic amino acid biosynthesis. This reaction introduces a second double bond into the aromatic ring system. This Rubrobacter xylanophilus (strain DSM 9941 / JCM 11954 / NBRC 16129 / PRD-1) protein is Chorismate synthase.